We begin with the raw amino-acid sequence, 197 residues long: Recombination protein RecR (197 aa).

The segment at 57–72 (CSVCFGITEDDPCRFC) adopts a C4-type zinc-finger fold. The 96-residue stretch at 79–174 (GAICVVEEPQ…RVTRLAHGIP (96 aa)) folds into the Toprim domain.

The protein belongs to the RecR family.

In terms of biological role, may play a role in DNA repair. It seems to be involved in an RecBC-independent recombinational process of DNA repair. It may act with RecF and RecO. The chain is Recombination protein RecR from Geobacter sulfurreducens (strain ATCC 51573 / DSM 12127 / PCA).